Consider the following 909-residue polypeptide: Protein translocase subunit SecA (909 aa).

ATP-binding positions include Gln87, 105–109, and Asp514; that span reads GEGKT. Positions 879 to 909 are disordered; sequence TPVQGGPKVGRNDPCPCGSGKKYKHCHGKLS. Zn(2+)-binding residues include Cys893, Cys895, Cys904, and His905. The segment covering 899 to 909 has biased composition (basic residues); it reads KKYKHCHGKLS.

The protein belongs to the SecA family. Monomer and homodimer. Part of the essential Sec protein translocation apparatus which comprises SecA, SecYEG and auxiliary proteins SecDF-YajC and YidC. Zn(2+) is required as a cofactor.

Its subcellular location is the cell inner membrane. It localises to the cytoplasm. The catalysed reaction is ATP + H2O + cellular proteinSide 1 = ADP + phosphate + cellular proteinSide 2.. In terms of biological role, part of the Sec protein translocase complex. Interacts with the SecYEG preprotein conducting channel. Has a central role in coupling the hydrolysis of ATP to the transfer of proteins into and across the cell membrane, serving both as a receptor for the preprotein-SecB complex and as an ATP-driven molecular motor driving the stepwise translocation of polypeptide chains across the membrane. The protein is Protein translocase subunit SecA of Azoarcus sp. (strain BH72).